We begin with the raw amino-acid sequence, 70 residues long: uncharacterized protein (70 aa).

The chain crosses the membrane as a helical span at residues 15–37; sequence LLVSSISESAVALIIITIRILFS.

It is found in the membrane. This is an uncharacterized protein from Saccharomyces cerevisiae (strain ATCC 204508 / S288c) (Baker's yeast).